A 640-amino-acid polypeptide reads, in one-letter code: 1-deoxy-D-xylulose-5-phosphate synthase (640 aa).

Thiamine diphosphate is bound by residues His-72 and 113 to 115; that span reads GHA. Asp-144 is a binding site for Mg(2+). Thiamine diphosphate contacts are provided by residues 145–146, Asn-174, Tyr-287, and Glu-370; that span reads GA. Asn-174 contributes to the Mg(2+) binding site.

Belongs to the transketolase family. DXPS subfamily. In terms of assembly, homodimer. Mg(2+) is required as a cofactor. It depends on thiamine diphosphate as a cofactor.

It carries out the reaction D-glyceraldehyde 3-phosphate + pyruvate + H(+) = 1-deoxy-D-xylulose 5-phosphate + CO2. Its pathway is metabolic intermediate biosynthesis; 1-deoxy-D-xylulose 5-phosphate biosynthesis; 1-deoxy-D-xylulose 5-phosphate from D-glyceraldehyde 3-phosphate and pyruvate: step 1/1. Catalyzes the acyloin condensation reaction between C atoms 2 and 3 of pyruvate and glyceraldehyde 3-phosphate to yield 1-deoxy-D-xylulose-5-phosphate (DXP). The protein is 1-deoxy-D-xylulose-5-phosphate synthase of Synechococcus sp. (strain RCC307).